Here is a 34-residue protein sequence, read N- to C-terminus: Photosystem II reaction center protein Psb30 (34 aa).

Residues 7 to 27 form a helical membrane-spanning segment; the sequence is VAQLISLFLILTSGPAIIVLI.

It belongs to the Psb30/Ycf12 family. As to quaternary structure, PSII is composed of 1 copy each of membrane proteins PsbA, PsbB, PsbC, PsbD, PsbE, PsbF, PsbH, PsbI, PsbJ, PsbK, PsbL, PsbM, PsbT, PsbX, PsbY, PsbZ, Psb30/Ycf12, peripheral proteins of the oxygen-evolving complex and a large number of cofactors. It forms dimeric complexes.

The protein localises to the plastid. It localises to the chloroplast thylakoid membrane. A core subunit of photosystem II (PSII), probably helps stabilize the reaction center. This Rhodomonas salina (Cryptomonas salina) protein is Photosystem II reaction center protein Psb30.